The sequence spans 317 residues: Coproporphyrinogen-III oxidase, aerobic 1 (317 aa).

Residues 38–47 are important for dimerization; sequence VLRDGAIFEQ. Ser82 contacts substrate. His96 (proton donor) is an active-site residue. Residues 98-100 and 269-274 contribute to the substrate site; these read NYR and NGRTES. Residues 251 to 286 form an important for dimerization region; it reads YVEFNLVYDRGTIFGLQTNGRTESILMSLPPLVRWE.

Belongs to the aerobic coproporphyrinogen-III oxidase family. As to quaternary structure, homodimer.

The protein resides in the cytoplasm. The enzyme catalyses coproporphyrinogen III + O2 + 2 H(+) = protoporphyrinogen IX + 2 CO2 + 2 H2O. Its pathway is porphyrin-containing compound metabolism; protoporphyrin-IX biosynthesis; protoporphyrinogen-IX from coproporphyrinogen-III (O2 route): step 1/1. Functionally, key enzyme in heme biosynthesis. Catalyzes the oxidative decarboxylation of propionic acid side chains of rings A and B of coproporphyrinogen III. This Nostoc sp. (strain PCC 7120 / SAG 25.82 / UTEX 2576) protein is Coproporphyrinogen-III oxidase, aerobic 1.